A 213-amino-acid chain; its full sequence is Holliday junction resolvase RecU (213 aa).

The Mg(2+) site is built by T99, D101, E114, and Q133.

The protein belongs to the RecU family. The cofactor is Mg(2+).

It localises to the cytoplasm. It catalyses the reaction Endonucleolytic cleavage at a junction such as a reciprocal single-stranded crossover between two homologous DNA duplexes (Holliday junction).. Endonuclease that resolves Holliday junction intermediates in genetic recombination. Cleaves mobile four-strand junctions by introducing symmetrical nicks in paired strands. Promotes annealing of linear ssDNA with homologous dsDNA. Required for DNA repair, homologous recombination and chromosome segregation. This is Holliday junction resolvase RecU from Lactococcus lactis subsp. cremoris (strain SK11).